Reading from the N-terminus, the 198-residue chain is Imidazoleglycerol-phosphate dehydratase (198 aa).

This sequence belongs to the imidazoleglycerol-phosphate dehydratase family.

It is found in the cytoplasm. The catalysed reaction is D-erythro-1-(imidazol-4-yl)glycerol 3-phosphate = 3-(imidazol-4-yl)-2-oxopropyl phosphate + H2O. It participates in amino-acid biosynthesis; L-histidine biosynthesis; L-histidine from 5-phospho-alpha-D-ribose 1-diphosphate: step 6/9. This Janthinobacterium sp. (strain Marseille) (Minibacterium massiliensis) protein is Imidazoleglycerol-phosphate dehydratase.